Here is an 858-residue protein sequence, read N- to C-terminus: Protein translocase subunit SecA (858 aa).

ATP-binding positions include Q85, 103-107, and D511; that span reads GEGKT. The Zn(2+) site is built by C840, C842, C851, and C852.

The protein belongs to the SecA family. Monomer and homodimer. Part of the essential Sec protein translocation apparatus which comprises SecA, SecYEG and auxiliary proteins SecDF. Other proteins may also be involved. It depends on Zn(2+) as a cofactor.

It is found in the cell membrane. The protein localises to the cytoplasm. It catalyses the reaction ATP + H2O + cellular proteinSide 1 = ADP + phosphate + cellular proteinSide 2.. Its function is as follows. Part of the Sec protein translocase complex. Interacts with the SecYEG preprotein conducting channel. Has a central role in coupling the hydrolysis of ATP to the transfer of proteins into and across the cell membrane, serving as an ATP-driven molecular motor driving the stepwise translocation of polypeptide chains across the membrane. In Lachnoclostridium phytofermentans (strain ATCC 700394 / DSM 18823 / ISDg) (Clostridium phytofermentans), this protein is Protein translocase subunit SecA.